The chain runs to 222 residues: MCPPRGLLLVTILVLLNHLDHLSLARNLPTPTPSPGMFQCLNHSQTLLRAISNTLQKARQTLEFYSCTSEEIDHEDITKDKTSTVEACLPLELTMNESCLASREISLITNGSCLASRKTSFMTTLCLSSIYEDLKMYQVEFKAMNAKLLMDPKRQIFLDQNMLTAIDELLQALNVNSVTVPQNSSLEEPDFYKTKIKLCILLHAFRIRAVTINRMMSYLNAS.

An N-terminal signal peptide occupies residues 1–25 (MCPPRGLLLVTILVLLNHLDHLSLA). 3 disulfide bridges follow: cysteine 40–cysteine 113, cysteine 67–cysteine 199, and cysteine 88–cysteine 126. Asparagine 42, asparagine 96, asparagine 110, and asparagine 183 each carry an N-linked (GlcNAc...) asparagine glycan.

The protein belongs to the IL-6 superfamily. As to quaternary structure, heterodimer with IL12B; disulfide-linked. This heterodimer is known as interleukin IL-12. Heterodimer with EBI3/IL27B; not disulfide-linked. This heterodimer is known as interleukin IL-35. Interacts with NBR1; this interaction promotes IL-12 secretion.

The protein resides in the secreted. Its function is as follows. Heterodimerizes with IL12B to form the IL-12 cytokine or with EBI3/IL27B to form the IL-35 cytokine. IL-12 is primarily produced by professional antigen-presenting cells (APCs) such as B-cells and dendritic cells (DCs) as well as macrophages and granulocytes and regulates T-cell and natural killer-cell responses, induces the production of interferon-gamma (IFN-gamma), favors the differentiation of T-helper 1 (Th1) cells and is an important link between innate resistance and adaptive immunity. Mechanistically, exerts its biological effects through a receptor composed of IL12R1 and IL12R2 subunits. Binding to the receptor results in the rapid tyrosine phosphorylation of a number of cellular substrates including the JAK family kinases TYK2 and JAK2. In turn, recruited STAT4 gets phosphorylated and translocates to the nucleus where it regulates cytokine/growth factor responsive genes. As part of IL-35, plays essential roles in maintaining the immune homeostasis of the liver microenvironment and also functions as an immune-suppressive cytokine. Mediates biological events through unconventional receptors composed of IL12RB2 and gp130/IL6ST heterodimers or homodimers. Signaling requires the transcription factors STAT1 and STAT4, which form a unique heterodimer that binds to distinct DNA sites. The polypeptide is Interleukin-12 subunit alpha (IL12A) (Felis catus (Cat)).